A 20-amino-acid chain; its full sequence is Cytochrome c oxidase subunit 7B-heart, mitochondrial (20 aa).

The protein belongs to the cytochrome c oxidase VIIb family. In terms of assembly, component of the cytochrome c oxidase (complex IV, CIV), a multisubunit enzyme composed of 14 subunits. The complex is composed of a catalytic core of 3 subunits MT-CO1, MT-CO2 and MT-CO3, encoded in the mitochondrial DNA, and 11 supernumerary subunits COX4I, COX5A, COX5B, COX6A, COX6B, COX6C, COX7A, COX7B, COX7C, COX8 and NDUFA4, which are encoded in the nuclear genome. The complex exists as a monomer or a dimer and forms supercomplexes (SCs) in the inner mitochondrial membrane with NADH-ubiquinone oxidoreductase (complex I, CI) and ubiquinol-cytochrome c oxidoreductase (cytochrome b-c1 complex, complex III, CIII), resulting in different assemblies (supercomplex SCI(1)III(2)IV(1) and megacomplex MCI(2)III(2)IV(2)).

Its subcellular location is the mitochondrion inner membrane. It carries out the reaction 4 Fe(II)-[cytochrome c] + O2 + 8 H(+)(in) = 4 Fe(III)-[cytochrome c] + 2 H2O + 4 H(+)(out). Its pathway is energy metabolism; oxidative phosphorylation. Its function is as follows. Component of the cytochrome c oxidase, the last enzyme in the mitochondrial electron transport chain which drives oxidative phosphorylation. The respiratory chain contains 3 multisubunit complexes succinate dehydrogenase (complex II, CII), ubiquinol-cytochrome c oxidoreductase (cytochrome b-c1 complex, complex III, CIII) and cytochrome c oxidase (complex IV, CIV), that cooperate to transfer electrons derived from NADH and succinate to molecular oxygen, creating an electrochemical gradient over the inner membrane that drives transmembrane transport and the ATP synthase. Cytochrome c oxidase is the component of the respiratory chain that catalyzes the reduction of oxygen to water. Electrons originating from reduced cytochrome c in the intermembrane space (IMS) are transferred via the dinuclear copper A center (CU(A)) of subunit 2 and heme A of subunit 1 to the active site in subunit 1, a binuclear center (BNC) formed by heme A3 and copper B (CU(B)). The BNC reduces molecular oxygen to 2 water molecules using 4 electrons from cytochrome c in the IMS and 4 protons from the mitochondrial matrix. This Thunnus obesus (Bigeye tuna) protein is Cytochrome c oxidase subunit 7B-heart, mitochondrial.